A 238-amino-acid polypeptide reads, in one-letter code: Uracil-DNA glycosylase (238 aa).

The active-site Proton acceptor is the aspartate 72.

Belongs to the uracil-DNA glycosylase (UDG) superfamily. UNG family.

It localises to the cytoplasm. The catalysed reaction is Hydrolyzes single-stranded DNA or mismatched double-stranded DNA and polynucleotides, releasing free uracil.. Functionally, excises uracil residues from the DNA which can arise as a result of misincorporation of dUMP residues by DNA polymerase or due to deamination of cytosine. The polypeptide is Uracil-DNA glycosylase (Chromobacterium violaceum (strain ATCC 12472 / DSM 30191 / JCM 1249 / CCUG 213 / NBRC 12614 / NCIMB 9131 / NCTC 9757 / MK)).